A 277-amino-acid polypeptide reads, in one-letter code: S-formylglutathione hydrolase FrmB (277 aa).

Active-site charge relay system residues include Ser-145, Asp-221, and His-254.

It belongs to the esterase D family.

The catalysed reaction is S-formylglutathione + H2O = formate + glutathione + H(+). In terms of biological role, serine hydrolase involved in the detoxification of formaldehyde. Hydrolyzes S-formylglutathione to glutathione and formate. In Escherichia coli O139:H28 (strain E24377A / ETEC), this protein is S-formylglutathione hydrolase FrmB (frmB).